The sequence spans 196 residues: Large ribosomal subunit protein uL11m (196 aa).

The protein belongs to the universal ribosomal protein uL11 family. In terms of assembly, component of the mitochondrial ribosome large subunit (39S) which comprises a 16S rRNA and about 50 distinct proteins.

It localises to the mitochondrion. The protein is Large ribosomal subunit protein uL11m (mRpL11) of Drosophila melanogaster (Fruit fly).